We begin with the raw amino-acid sequence, 61 residues long: Large ribosomal subunit protein eL24 (61 aa).

Cys-7, Cys-10, Cys-33, and Cys-37 together coordinate Zn(2+). Residues 7–37 (CSFCGGDIPPATGMMHVRNDGTILWFCSNKC) form a C4-type zinc finger.

Belongs to the eukaryotic ribosomal protein eL24 family. Part of the 50S ribosomal subunit. Forms a cluster with proteins L3 and L14. It depends on Zn(2+) as a cofactor.

Functionally, binds to the 23S rRNA. The polypeptide is Large ribosomal subunit protein eL24 (Metallosphaera sedula (strain ATCC 51363 / DSM 5348 / JCM 9185 / NBRC 15509 / TH2)).